A 371-amino-acid chain; its full sequence is Alanine dehydrogenase (371 aa).

Substrate is bound by residues Arg15 and Lys74. His95 functions as the Proton donor/acceptor in the catalytic mechanism. NAD(+) is bound by residues Ser133, 177-178, Asp197, Ser219, 238-239, 266-269, Arg279, and 298-301; these read QA, VL, IAID, and VANM. The Proton donor/acceptor role is filled by Asp269.

It belongs to the AlaDH/PNT family. As to quaternary structure, homohexamer. Trimer of dimer.

It carries out the reaction L-alanine + NAD(+) + H2O = pyruvate + NH4(+) + NADH + H(+). It participates in amino-acid degradation; L-alanine degradation via dehydrogenase pathway; NH(3) and pyruvate from L-alanine: step 1/1. In terms of biological role, catalyzes the reversible reductive amination of pyruvate to L-alanine. May play a role in cell wall synthesis as L-alanine is an important constituent of the peptidoglycan layer. The sequence is that of Alanine dehydrogenase (ald) from Staphylococcus saprophyticus subsp. saprophyticus (strain ATCC 15305 / DSM 20229 / NCIMB 8711 / NCTC 7292 / S-41).